An 837-amino-acid chain; its full sequence is Probable aldehyde oxidase 4 (837 aa).

A 2Fe-2S ferredoxin-type domain is found at 9–98 (ERVVFELNGE…FCSIITTEGL (90 aa)). [2Fe-2S] cluster contacts are provided by C50, C55, C58, and C80. Residues 240 to 427 (ISGPREGWYC…LSIFIPHWAS (188 aa)) form the FAD-binding PCMH-type domain.

Belongs to the xanthine dehydrogenase family. In terms of assembly, aldehyde oxidases (AO) are homodimers and heterodimers of AO subunits. It depends on [2Fe-2S] cluster as a cofactor. The cofactor is FAD. Requires Mo-molybdopterin as cofactor.

The enzyme catalyses an aldehyde + O2 + H2O = a carboxylate + H2O2 + H(+). This is Probable aldehyde oxidase 4 from Oryza sativa subsp. japonica (Rice).